The following is a 1584-amino-acid chain: Cilia- and flagella-associated protein 74 (1584 aa).

Positions 300 to 379 (RKFQAWDRAK…EAEEEKRKKQ (80 aa)) form a coiled coil. The span at 692-706 (SEQQLEGTESSQADM) shows a compositional bias: polar residues. Residues 692-739 (SEQQLEGTESSQADMQSRKELEKLDKEQEEEQPAEPERLTTVIPPSEE) are disordered. Positions 707 to 717 (QSRKELEKLDK) are enriched in basic and acidic residues.

Belongs to the CFAP74 family.

Its subcellular location is the cytoplasm. It localises to the cytoskeleton. The protein localises to the cilium axoneme. It is found in the flagellum axoneme. In terms of biological role, as part of the central apparatus of the cilium axoneme may play a role in cilium movement. May play an important role in sperm architecture and function. The polypeptide is Cilia- and flagella-associated protein 74 (Homo sapiens (Human)).